Reading from the N-terminus, the 116-residue chain is U16-barytoxin-Tl1a (116 aa).

The N-terminal stretch at 1–20 (MKTIIVFLSLLVLATKFGDA) is a signal peptide. Positions 21–74 (KEGVNQKQKKEVTQNEFREEYLNEMAAMSLVQQLEAIERALFENEAGRNSRQKR) are excised as a propeptide. Disulfide bonds link Cys-75/Cys-90, Cys-82/Cys-95, and Cys-89/Cys-110.

The protein belongs to the neurotoxin 14 (magi-1) family. 06 (ICK-Trit) subfamily. In terms of tissue distribution, expressed by the venom gland.

It is found in the secreted. Its function is as follows. Ion channel inhibitor. The sequence is that of U16-barytoxin-Tl1a from Trittame loki (Brush-footed trapdoor spider).